We begin with the raw amino-acid sequence, 140 residues long: Midkine (140 aa).

The signal sequence occupies residues 1–20 (MQHRSFFLLALVALLAVTTA). 5 disulfide bridges follow: cysteine 34–cysteine 58, cysteine 42–cysteine 67, cysteine 49–cysteine 71, cysteine 81–cysteine 113, and cysteine 91–cysteine 123.

This sequence belongs to the pleiotrophin family. In terms of assembly, homodimer. Interacts with ALK. Interacts with LRP1; promotes neuronal survival. Interacts with LRP2. Interacts with NCAM1. Interacts (via C-terminal) with PTPRZ1 (via chondroitin sulfate chains); this interaction is inhibited by PTN; this interaction promotes neuronal migration. Interacts with NCL; this interaction promotes NCL clustering and lateral movements of this complex into lipid rafts leading to MDK internalization. Interacts with LRP6 and LRP8: this interaction is calcium dependent. Interacts with ITGA4. Interacts with ITGA6. Interacts with ITGB1. Interacts with ITGA4:ITGB1 complex; this interaction mediates MDK-induced osteoblast cells migration through PXN phosphorylation. Interacts with ITGA6:ITGB1 complex; this interaction mediates MDK-induced neurite outgrowth. Interacts with NOTCH2; this interactio mediates a nuclear accumulation of NOTCH2 and therefore activation of NOTCH2 signaling leading to interaction between HES1 and STAT3. Interacts with GPC2 (via heparan sulfate chain); this interaction is inhibited by heparin followed by chondroitin sulfate E; this interaction induces GPC2 clustering through heparan sulfate chain; this interaction induces neuronal cell adhesion and neurite outgrowth. Interacts with SDC3; this interaction induces SDC3 clustering; this interaction induces neuronal cell adhesion and neurite outgrowth. Interacts with SDC1. Interacts with CSPG5; this interaction promotes elongation of oligodendroglial precursor-like cells. Expressed at a low level in arteries, and at higher levels in newly formed neointima. In brain, expressed in the caudate nucleus and the brain stem.

The protein resides in the secreted. Developmentally regulated, secreted growth factor homologous to pleiotrophin (PTN), which has heparin binding activity. Binds anaplastic lymphoma kinase (ALK) which induces ALK activation and subsequent phosphorylation of the insulin receptor substrate (IRS1), followed by the activation of mitogen-activated protein kinase (MAPK) and PI3-kinase, and the induction of cell proliferation. Involved in neointima formation after arterial injury, possibly by mediating leukocyte recruitment. Also involved in early fetal adrenal gland development. Its function is as follows. Secreted protein that functions as a cytokine and growth factor and mediates its signal through cell-surface proteoglycan and non-proteoglycan receptors. Binds cell-surface proteoglycan receptors via their chondroitin sulfate (CS) groups. Thereby regulates many processes like inflammatory response, cell proliferation, cell adhesion, cell growth, cell survival, tissue regeneration, cell differentiation and cell migration. Participates in inflammatory processes by exerting two different activities. Firstly, mediates neutrophils and macrophages recruitment to the sites of inflammation both by direct action by cooperating namely with ITGB2 via LRP1 and by inducing chemokine expression. This inflammation can be accompanied by epithelial cell survival and smooth muscle cell migration after renal and vessel damage, respectively. Secondly, suppresses the development of tolerogenic dendric cells thereby inhibiting the differentiation of regulatory T cells and also promote T cell expansion through NFAT signaling and Th1 cell differentiation. Promotes tissue regeneration after injury or trauma. After heart damage negatively regulates the recruitment of inflammatory cells and mediates cell survival through activation of anti-apoptotic signaling pathways via MAPKs and AKT pathways through the activation of angiogenesis. Also facilitates liver regeneration as well as bone repair by recruiting macrophage at trauma site and by promoting cartilage development by facilitating chondrocyte differentiation. Plays a role in brain by promoting neural precursor cells survival and growth through interaction with heparan sulfate proteoglycans. Binds PTPRZ1 and promotes neuronal migration and embryonic neurons survival. Binds SDC3 or GPC2 and mediates neurite outgrowth and cell adhesion. Binds chondroitin sulfate E and heparin leading to inhibition of neuronal cell adhesion induced by binding with GPC2. Binds CSPG5 and promotes elongation of oligodendroglial precursor-like cells. Also binds ITGA6:ITGB1 complex; this interaction mediates MDK-induced neurite outgrowth. Binds LRP1; promotes neuronal survival. Binds ITGA4:ITGB1 complex; this interaction mediates MDK-induced osteoblast cells migration through PXN phosphorylation. Binds anaplastic lymphoma kinase (ALK) which induces ALK activation and subsequent phosphorylation of the insulin receptor substrate (IRS1), followed by the activation of mitogen-activated protein kinase (MAPK) and PI3-kinase, and the induction of cell proliferation. Promotes epithelial to mesenchymal transition through interaction with NOTCH2. During arteriogenesis, plays a role in vascular endothelial cell proliferation by inducing VEGFA expression and release which in turn induces nitric oxide synthase expression. Moreover activates vasodilation through nitric oxide synthase activation. Negatively regulates bone formation in response to mechanical load by inhibiting Wnt/beta-catenin signaling in osteoblasts. In addition plays a role in hippocampal development, working memory, auditory response, early fetal adrenal gland development and the female reproductive system. The polypeptide is Midkine (Rattus norvegicus (Rat)).